The following is a 1153-amino-acid chain: Nitric oxide synthase (1153 aa).

S3 lines the (6R)-L-erythro-5,6,7,8-tetrahydrobiopterin pocket. C82 provides a ligand contact to heme b. The L-arginine site is built by Q145, W254, and N264. Residue F358 participates in (6R)-L-erythro-5,6,7,8-tetrahydrobiopterin binding. The interval P397 to M417 is calmodulin-binding. One can recognise a Flavodoxin-like domain in the interval C427–F610. Position 556 to 587 (V556 to V587) interacts with FMN. One can recognise an FAD-binding FR-type domain in the interval K660–P903. FAD-binding positions include Y697–A708 and L836–S846. NADP(+) is bound at residue I911–R929. A run of 11 repeats spans residues E934 to C940, E941 to C947, E948 to C954, E955 to C961, E962 to C968, E969 to C975, E976 to C982, E983 to C989, E990 to C996, E997 to W1003, and E1004 to C1010. An 11 X 7 AA tandem repeats of E-[NTR]-[ST]-[IM]-[PLQ]-[SP]-[CW] region spans residues E934–C1010. G1089 to V1104 is a binding site for NADP(+).

This sequence belongs to the NOS family. It depends on heme b as a cofactor. Requires FAD as cofactor. FMN is required as a cofactor. Expressed in the central nervous system, in the serotonergic cerebral giant cells. The isoform Long and isoform Short are expressed equally in the CNS.

It catalyses the reaction 2 L-arginine + 3 NADPH + 4 O2 + H(+) = 2 L-citrulline + 2 nitric oxide + 3 NADP(+) + 4 H2O. With respect to regulation, stimulated by calcium/calmodulin. Its function is as follows. Produces nitric oxide (NO) which is a messenger molecule with diverse functions throughout the body. In Lymnaea stagnalis (Great pond snail), this protein is Nitric oxide synthase (NOS).